Reading from the N-terminus, the 94-residue chain is UPF0381 protein YfcZ (94 aa).

It belongs to the UPF0381 family.

The sequence is that of UPF0381 protein YfcZ (yfcZ) from Escherichia coli O6:H1 (strain CFT073 / ATCC 700928 / UPEC).